The chain runs to 208 residues: TM2 domain-containing protein 1 (208 aa).

A signal peptide spans 1–37; the sequence is MAAAWPAGRASPAAGPPGLLRTLWLVTVAAGHCGAAA. Residues 38–129 lie on the Extracellular side of the membrane; the sequence is SGAVGGEETP…YSYKVAVALS (92 aa). 3 N-linked (GlcNAc...) asparagine glycosylation sites follow: Asn73, Asn76, and Asn97. The TM2 domain maps to 119 to 167; the sequence is GYSYKVAVALSLFLGWLGADRFYLGYPALGLLKFCTVGFCGIGSLIDFI. A helical membrane pass occupies residues 130 to 150; the sequence is LFLGWLGADRFYLGYPALGLL. At 151 to 154 the chain is on the cytoplasmic side; it reads KFCT. A helical membrane pass occupies residues 155 to 175; sequence VGFCGIGSLIDFILISMQIVG. The Extracellular segment spans residues 176–208; the sequence is PSDGSSYIIDYYGTRLTRLSITNETFRKTQLYP. An N-linked (GlcNAc...) asparagine glycan is attached at Asn198.

This sequence belongs to the TM2 family. In terms of assembly, interacts with APP beta-APP42 (amyloid-beta protein 42). N-glycosylated.

The protein localises to the membrane. Its function is as follows. May participate in amyloid-beta-induced apoptosis via its interaction with beta-APP42. This chain is TM2 domain-containing protein 1 (Tm2d1), found in Mus musculus (Mouse).